We begin with the raw amino-acid sequence, 147 residues long: Leghemoglobin-1 (147 aa).

The region spanning 2–147 (SFTDKQEALV…LATAIKKAMS (146 aa)) is the Globin domain. A nitrated tyrosine mark is found at Tyr-25 and Tyr-30. Residue Ser-45 coordinates heme b. Ser-45 is subject to Phosphoserine. His-62 provides a ligand contact to O2. 3 residues coordinate heme b: Lys-65, His-94, and Lys-97. Tyr-135 is modified (nitrated tyrosine).

Belongs to the plant globin family. As to quaternary structure, monomer. Post-translationally, nitrated in effective nodules and particularly in hypoxic conditions; this mechanism may play a protective role in the symbiosis by buffering toxic peroxynitrite NO(2)(-). Nitration level decrease during nodule senescence. In terms of processing, phosphorylation at Ser-45 disrupts the molecular environment of its porphyrin ring oxygen binding pocket, thus leading to a reduced oxygen consumption and to the delivery of oxygen O(2) to symbiosomes. Root nodules.

It localises to the cytoplasm. The protein resides in the cytosol. It is found in the nucleus. In terms of biological role, leghemoglobin that reversibly binds oxygen O(2) through a pentacoordinated heme iron. In root nodules, facilitates the diffusion of oxygen to the bacteroids while preventing the bacterial nitrogenase from being inactivated by buffering dioxygen, nitric oxide and carbon monoxide, and promoting the formation of reactive oxygen species (ROS, e.g. H(2)O(2)). This role is essential for symbiotic nitrogen fixation (SNF). The polypeptide is Leghemoglobin-1 (Medicago sativa (Alfalfa)).